We begin with the raw amino-acid sequence, 105 residues long: Large ribosomal subunit protein uL24 (105 aa).

The protein belongs to the universal ribosomal protein uL24 family. In terms of assembly, part of the 50S ribosomal subunit.

One of two assembly initiator proteins, it binds directly to the 5'-end of the 23S rRNA, where it nucleates assembly of the 50S subunit. In terms of biological role, one of the proteins that surrounds the polypeptide exit tunnel on the outside of the subunit. This chain is Large ribosomal subunit protein uL24, found in Rhizorhabdus wittichii (strain DSM 6014 / CCUG 31198 / JCM 15750 / NBRC 105917 / EY 4224 / RW1) (Sphingomonas wittichii).